The chain runs to 546 residues: uncharacterized protein (546 aa).

The next 9 membrane-spanning stretches (helical) occupy residues 27–46, 59–78, 83–100, 114–134, 143–163, 176–196, 204–224, 237–257, and 268–288; these read EALV…PFVF, NGLI…ALVT, FALI…YAIL, SVLF…AYAA, PLII…IPIF, MLYS…ALGI, VIAV…VFTA, LSSA…FGVF, and MIWI…LIGW.

The protein resides in the cell membrane. This is an uncharacterized protein from Bacillus subtilis (strain 168).